Reading from the N-terminus, the 370-residue chain is GTPase Obg (370 aa).

The Obg domain maps to 1–159; sequence MKFVDEAYID…KKLKLELRVL (159 aa). The OBG-type G domain occupies 160–333; the sequence is ADVGLLGMPN…LVQAIYQHVA (174 aa). Residues 166 to 173, 191 to 195, 213 to 216, 283 to 286, and 314 to 316 contribute to the GTP site; these read GMPNAGKS, FTTLH, DVPG, NKLD, and SAL. The Mg(2+) site is built by serine 173 and threonine 193. The tract at residues 346-370 is disordered; sequence FAEPEADESDDEPRFAPQADDPRFR.

This sequence belongs to the TRAFAC class OBG-HflX-like GTPase superfamily. OBG GTPase family. Monomer. Mg(2+) serves as cofactor.

The protein localises to the cytoplasm. Functionally, an essential GTPase which binds GTP, GDP and possibly (p)ppGpp with moderate affinity, with high nucleotide exchange rates and a fairly low GTP hydrolysis rate. Plays a role in control of the cell cycle, stress response, ribosome biogenesis and in those bacteria that undergo differentiation, in morphogenesis control. The protein is GTPase Obg of Methylibium petroleiphilum (strain ATCC BAA-1232 / LMG 22953 / PM1).